The chain runs to 453 residues: Gastrin/cholecystokinin type B receptor (453 aa).

The Extracellular segment spans residues 1–57; it reads MELLKLNRSAQGSGAGPGASLCRAGGALLNSSGAGNLSCEPPRLRGAGTRELELAIR. N-linked (GlcNAc...) asparagine glycosylation is found at Asn7, Asn30, and Asn36. A helical transmembrane segment spans residues 58 to 79; sequence VTLYAVIFLMSVGGNVLIIVVL. Topologically, residues 80-87 are cytoplasmic; the sequence is GLSRRLRT. The chain crosses the membrane as a helical span at residues 88–109; that stretch reads VTNAFLLSLAVSDLLLAVACMP. At 110-131 the chain is on the extracellular side; sequence FTLLPNLMGTFIFGTVVCKAVS. A disulfide bridge connects residues Cys127 and Cys206. A helical transmembrane segment spans residues 132–150; it reads YLMGVSVSVSTLSLVAIAL. Residues 151 to 170 are Cytoplasmic-facing; sequence ERYSAICRPLQARVWQTRSH. Residues 171–189 form a helical membrane-spanning segment; it reads AARVIIATWMLSGLLMVPY. Residues 190 to 220 lie on the Extracellular side of the membrane; it reads PVYTAVQPAGGARALQCVHRWPSARVRQTWS. The helical transmembrane segment at 221–243 threads the bilayer; it reads VLLLLLLFFVPGVVMAVAYGLIS. Residues 244–339 are Cytoplasmic-facing; it reads RELYLGLRFD…KLLAKKRVVR (96 aa). The interval 258–286 is disordered; that stretch reads SESRVRSQGGLRGGAGPGPAPPNGSCRPE. The helical transmembrane segment at 340–361 threads the bilayer; sequence MLLVIVVLFFLCWLPLYSANTW. The Extracellular portion of the chain corresponds to 362-379; that stretch reads RAFDSSGAHRALSGAPIS. The chain crosses the membrane as a helical span at residues 380–400; the sequence is FIHLLSYASACVNPLVYCFMH. Residues 401 to 453 are Cytoplasmic-facing; that stretch reads RRFRQACLETCARCCPRPPRARPRPLPDEDPPTPSIASLSRLSYTTISTLGPG. Cys414 is lipidated: S-palmitoyl cysteine. A disordered region spans residues 422-453; it reads RPRPLPDEDPPTPSIASLSRLSYTTISTLGPG. Polar residues predominate over residues 435–453; it reads SIASLSRLSYTTISTLGPG.

The protein belongs to the G-protein coupled receptor 1 family. In terms of tissue distribution, parietal cells, pancreas, brain and various neoplastic tissues.

It localises to the cell membrane. In terms of biological role, receptor for gastrin and cholecystokinin. The CCK-B receptors occur throughout the central nervous system where they modulate anxiety, analgesia, arousal, and neuroleptic activity. This receptor mediates its action by association with G proteins that activate a phosphatidylinositol-calcium second messenger system. This Canis lupus familiaris (Dog) protein is Gastrin/cholecystokinin type B receptor (CCKBR).